We begin with the raw amino-acid sequence, 99 residues long: DNA-binding protein Fis (99 aa).

A DNA-binding region (H-T-H motif) is located at residues 75 to 94; it reads QTRAANMLGINRGTLRKKLK.

The protein belongs to the transcriptional regulatory Fis family. In terms of assembly, homodimer.

Activates ribosomal RNA transcription. Plays a direct role in upstream activation of rRNA promoters. This chain is DNA-binding protein Fis, found in Haemophilus influenzae (strain 86-028NP).